Here is a 127-residue protein sequence, read N- to C-terminus: Major sperm protein 10/36/56/76 (127 aa).

A2 carries the post-translational modification N-acetylalanine. One can recognise an MSP domain in the interval 9–126 (DIQTQPNAKI…RRKNLPIEYN (118 aa)).

In terms of tissue distribution, sperm.

It is found in the cell projection. The protein localises to the pseudopodium. The protein resides in the cytoplasm. Its subcellular location is the cytoskeleton. Central component in molecular interactions underlying sperm crawling. Forms an extensive filament system that extends from sperm villipoda, along the leading edge of the pseudopod. This is Major sperm protein 10/36/56/76 (msp-10) from Caenorhabditis elegans.